The chain runs to 281 residues: Deoxyribonuclease-1 (281 aa).

The first 21 residues, 1–21 (MRSEMLTALLTLAVLLQVAGS), serve as a signal peptide directing secretion. N39 is a glycosylation site (N-linked (GlcNAc...) asparagine). E99 is a catalytic residue. A disulfide bridge links C122 with C125. H155 is a catalytic residue.

The protein belongs to the DNase I family. The cofactor is Ca(2+). It depends on Mg(2+) as a cofactor. Equivalent levels in pancreas and parotid gland, low amounts in kidney, liver, small intestine, stomach and thymus.

Its subcellular location is the secreted. The protein localises to the zymogen granule. The protein resides in the nucleus envelope. It catalyses the reaction Endonucleolytic cleavage to 5'-phosphodinucleotide and 5'-phosphooligonucleotide end-products.. In terms of biological role, serum endocuclease secreted into body fluids by a wide variety of exocrine and endocrine organs. Expressed by non-hematopoietic tissues and preferentially cleaves protein-free DNA. Among other functions, seems to be involved in cell death by apoptosis. Binds specifically to G-actin and blocks actin polymerization. Preferentially attacks double-stranded DNA and produces oligonucleotides with 5'-phospho and 3'-hydroxy termini. Together with DNASE1L3, plays a key role in degrading neutrophil extracellular traps (NETs). NETs are mainly composed of DNA fibers and are released by neutrophils to bind pathogens during inflammation. Degradation of intravascular NETs by DNASE1 and DNASE1L3 is required to prevent formation of clots that obstruct blood vessels and cause organ damage following inflammation. This chain is Deoxyribonuclease-1 (DNASE1), found in Oryctolagus cuniculus (Rabbit).